Here is a 238-residue protein sequence, read N- to C-terminus: Putative csd-like protein HI_1343 (238 aa).

N6-(pyridoxal phosphate)lysine is present on Lys146.

This sequence belongs to the class-V pyridoxal-phosphate-dependent aminotransferase family. Csd subfamily.

In Haemophilus influenzae (strain ATCC 51907 / DSM 11121 / KW20 / Rd), this protein is Putative csd-like protein HI_1343.